Here is a 386-residue protein sequence, read N- to C-terminus: Methylthioribose-1-phosphate isomerase (386 aa).

The Proton donor role is filled by D258.

The protein belongs to the eIF-2B alpha/beta/delta subunits family. MtnA subfamily.

The protein localises to the cytoplasm. Its subcellular location is the nucleus. It carries out the reaction 5-(methylsulfanyl)-alpha-D-ribose 1-phosphate = 5-(methylsulfanyl)-D-ribulose 1-phosphate. It participates in amino-acid biosynthesis; L-methionine biosynthesis via salvage pathway; L-methionine from S-methyl-5-thio-alpha-D-ribose 1-phosphate: step 1/6. Its function is as follows. Catalyzes the interconversion of methylthioribose-1-phosphate (MTR-1-P) into methylthioribulose-1-phosphate (MTRu-1-P). The protein is Methylthioribose-1-phosphate isomerase of Postia placenta (strain ATCC 44394 / Madison 698-R) (Brown rot fungus).